A 447-amino-acid polypeptide reads, in one-letter code: Exodeoxyribonuclease 7 large subunit (447 aa).

The protein belongs to the XseA family. As to quaternary structure, heterooligomer composed of large and small subunits.

It is found in the cytoplasm. The catalysed reaction is Exonucleolytic cleavage in either 5'- to 3'- or 3'- to 5'-direction to yield nucleoside 5'-phosphates.. Its function is as follows. Bidirectionally degrades single-stranded DNA into large acid-insoluble oligonucleotides, which are then degraded further into small acid-soluble oligonucleotides. The protein is Exodeoxyribonuclease 7 large subunit of Exiguobacterium sibiricum (strain DSM 17290 / CCUG 55495 / CIP 109462 / JCM 13490 / 255-15).